Here is a 1042-residue protein sequence, read N- to C-terminus: Aldehyde reductase lnaA (1042 aa).

The tract at residues 29–425 (HAFLNPSAMA…GRRDHQVKVR (397 aa)) is adenylation (A) domain. Residues 532–609 (DNEDSTRGKL…RLAGILEERI (78 aa)) form the Carrier domain. The residue at position 569 (S569) is an O-(pantetheine 4'-phosphoryl)serine. A short-chain dehydrogenase/reductase (R) domain region spans residues 655-897 (LTGATGFVGS…FVPVDYVNAV (243 aa)).

The protein belongs to the NRP synthetase family.

The enzyme catalyses L-tyrosinal + AMP + diphosphate + NADP(+) = L-tyrosine + ATP + NADPH + H(+). It functions in the pathway secondary metabolite biosynthesis. Functionally, non-canonical nonribosomal peptide synthetase; part of the lna gene cluster that mediates the biosynthesis of diastereomeric piperazines. Lna and lnb clusters encode sets of enzymes that produce overlapping sets of previously undescribed metabolites such as piperazinomycin-like metabolites or morpholine. The lna and lnb biosynthetic pathways appear to be part of a signaling network that controls the formation of sclerotia, a resilient overwintering structure. One primary function of the non-canonical nonribosomal peptide synthetases lnaA and lnbA consists in the reduction of L-tyrosine. The presence in the clusters of tailoring enzymes such as the oxidoreductases lnaB, lnbB, lnaE or lnbE, as well as of the cytochrome P450 monooxygenases lnaC, lnaD, or lnbC, might explain formation of various diastereomeric piperazines. This Aspergillus flavus (strain ATCC 200026 / FGSC A1120 / IAM 13836 / NRRL 3357 / JCM 12722 / SRRC 167) protein is Aldehyde reductase lnaA.